The sequence spans 170 residues: Adenine phosphoribosyltransferase (170 aa).

The protein belongs to the purine/pyrimidine phosphoribosyltransferase family. In terms of assembly, homodimer.

It is found in the cytoplasm. The catalysed reaction is AMP + diphosphate = 5-phospho-alpha-D-ribose 1-diphosphate + adenine. It functions in the pathway purine metabolism; AMP biosynthesis via salvage pathway; AMP from adenine: step 1/1. Its function is as follows. Catalyzes a salvage reaction resulting in the formation of AMP, that is energically less costly than de novo synthesis. In Kosmotoga olearia (strain ATCC BAA-1733 / DSM 21960 / TBF 19.5.1), this protein is Adenine phosphoribosyltransferase.